Consider the following 410-residue polypeptide: Platelet-activating factor acetylhydrolase IB subunit beta (410 aa).

Positions 1 to 38 are required for self-association and interaction with PAFAH1B2 and PAFAH1B3; the sequence is MVLSQRQRDELNRAIADYLRSNGYEEAYSVFKKEAELD. The segment at 1-66 is interaction with NDE1; it reads MVLSQRQRDE…SVIRLQKKVM (66 aa). An interaction with NDEL1 region spans residues 1-102; the sequence is MVLSQRQRDE…EWIPRPPEKY (102 aa). Residues 7–39 enclose the LisH domain; that stretch reads QRDELNRAIADYLRSNGYEEAYSVFKKEAELDM. An N6-acetyllysine modification is found at Lys53. A coiled-coil region spans residues 56 to 82; it reads TSVIRLQKKVMELESKLNEAKEEFTSG. The interval 83-410 is interaction with dynein and dynactin; that stretch reads GPLGQKRDPK…DQTVKVWECR (328 aa). 7 WD repeats span residues 106–147, 148–187, 190–229, 232–271, 274–333, 336–377, and 378–410; these read GHRS…RTLK, GHTD…CIRT, GHDH…CVKT, GHRE…CKAE, EHEH…CLMT, GHDN…KTLN, and AHEH…WECR. A Phosphoserine modification is found at Ser109. An interaction with DCX region spans residues 367 to 409; it reads YKNKRCMKTLNAHEHFVTSLDFHKTAPYVVTGSVDQTVKVWEC. Residues 388 to 410 are interaction with NDEL1; the sequence is FHKTAPYVVTGSVDQTVKVWECR.

The protein belongs to the WD repeat LIS1/nudF family. In terms of assembly, can self-associate. Component of the cytosolic PAF-AH (I) heterotetrameric enzyme, which is composed of PAFAH1B1 (beta), PAFAH1B2 (alpha2) and PAFAH1B3 (alpha1) subunits. The catalytic activity of the enzyme resides in the alpha1 (PAFAH1B3) and alpha2 (PAFAH1B2) subunits, whereas the beta subunit (PAFAH1B1) has regulatory activity. Trimer formation is not essential for the catalytic activity. Interacts with the catalytic dimer of PAF-AH (I) heterotetrameric enzyme: interacts with PAFAH1B2 homodimer (alpha2/alpha2 homodimer), PAFAH1B3 homodimer (alpha1/alpha1 homodimer) and PAFAH1B2-PAFAH1B3 heterodimer (alpha2/alpha1 heterodimer). Interacts with DCX, dynein, dynactin, IQGAP1, KATNB1, NDE1, NDEL1, NUDC and RSN. Interacts with DISC1, and this interaction is enhanced by NDEL1. Interacts with DAB1 when DAB1 is phosphorylated in response to RELN/reelin signaling. Interacts with INTS13. Interacts with DCDC1.

It is found in the cytoplasm. The protein localises to the cytoskeleton. It localises to the microtubule organizing center. The protein resides in the centrosome. Its subcellular location is the spindle. It is found in the nucleus membrane. Regulatory subunit (beta subunit) of the cytosolic type I platelet-activating factor (PAF) acetylhydrolase (PAF-AH (I)), an enzyme that catalyzes the hydrolyze of the acetyl group at the sn-2 position of PAF and its analogs and participates in PAF inactivation. Regulates the PAF-AH (I) activity in a catalytic dimer composition-dependent manner. Positively regulates the activity of the minus-end directed microtubule motor protein dynein. May enhance dynein-mediated microtubule sliding by targeting dynein to the microtubule plus end. Required for several dynein- and microtubule-dependent processes such as the maintenance of Golgi integrity, the peripheral transport of microtubule fragments and the coupling of the nucleus and centrosome. Required during brain development for the proliferation of neuronal precursors and the migration of newly formed neurons from the ventricular/subventricular zone toward the cortical plate. Neuronal migration involves a process called nucleokinesis, whereby migrating cells extend an anterior process into which the nucleus subsequently translocates. During nucleokinesis dynein at the nuclear surface may translocate the nucleus towards the centrosome by exerting force on centrosomal microtubules. Also required for proper activation of Rho GTPases and actin polymerization at the leading edge of locomoting cerebellar neurons and postmigratory hippocampal neurons in response to calcium influx triggered via NMDA receptors. May also play a role in other forms of cell locomotion including the migration of fibroblasts during wound healing. Required for dynein recruitment to microtubule plus ends and BICD2-bound cargos. May modulate the Reelin pathway through interaction of the PAF-AH (I) catalytic dimer with VLDLR. The sequence is that of Platelet-activating factor acetylhydrolase IB subunit beta from Felis catus (Cat).